Here is a 214-residue protein sequence, read N- to C-terminus: Dynein axonemal assembly factor 6 (214 aa).

Disordered regions lie at residues 1–22 (MESENMDSENMKTENMESQNVD) and 34–68 (ALSKLLNPEEEDDSDYGQTNGLSTIGAMGPGNIGP).

It belongs to the PIH1 family. As to quaternary structure, interacts with HSPA1A/B and HSP90AA1. Interacts with DNAAF2 and DNAAF4. Interacts wuth DNAI2. In terms of tissue distribution, expressed in testis, small intestine, prostate, adrenal gland, spleen, lung, bladder, breast and ovary. Expressed in ciliated epithelial cells.

It is found in the cytoplasm. It localises to the golgi apparatus. The protein resides in the trans-Golgi network. Its function is as follows. Plays a role in cytoplasmic pre-assembly of axonemal dynein. The polypeptide is Dynein axonemal assembly factor 6 (Homo sapiens (Human)).